The chain runs to 44 residues: Thymosin beta-12 (44 aa).

2 stretches are compositionally biased toward basic and acidic residues: residues M1–E25 and E33–S44. The segment at M1–S44 is disordered. An N-acetylserine modification is found at S2.

The protein belongs to the thymosin beta family.

The protein localises to the cytoplasm. Its subcellular location is the cytoskeleton. Functionally, plays an important role in the organization of the cytoskeleton. Binds to and sequesters actin monomers (G actin) and therefore inhibits actin polymerization. In Lateolabrax japonicus (Japanese sea perch), this protein is Thymosin beta-12.